The primary structure comprises 155 residues: MDKELKNNLEILLEEVAKEFNLKVYSLNLLTNQNPIIIKIIIKKTNEEDITIEDCSRFNNPASAVIENSNLLKCSYVLEISSQGVSDELTSERDFKTFKGFPVNVELNQKNSRIKLLNGLLYEKSKDYLAINIKGKIKKIPFNEVLKISLCTRQD.

Belongs to the RimP family.

It localises to the cytoplasm. In terms of biological role, required for maturation of 30S ribosomal subunits. The chain is Ribosome maturation factor RimP from Prochlorococcus marinus (strain MIT 9515).